The sequence spans 935 residues: C-1-tetrahydrofolate synthase, cytoplasmic (935 aa).

Position 1 is an N-acetylmethionine (M1). The segment at 2 to 291 is methylenetetrahydrofolate dehydrogenase and methenyltetrahydrofolate cyclohydrolase (D/C) domain; sequence APAEILNGRE…MLMQSTVESA (290 aa). Residues 52 to 56 and 99 to 101 each bind substrate; these read YINVK and VQL. K56 is a catalytic residue. NADP(+) contacts are provided by residues 172–174 and S197; that span reads GRS. 272 to 276 is a binding site for substrate; that stretch reads PGGVG. Residues 310–935 are formyltetrahydrofolate synthetase domain; sequence LNLKTPDPSD…PETQQVNGLF (626 aa). Position 318 is a phosphoserine (S318). Position 380–387 (380–387) interacts with ATP; the sequence is TPLGEGKS. A phosphoserine mark is found at S413 and S490.

In the N-terminal section; belongs to the tetrahydrofolate dehydrogenase/cyclohydrolase family. The protein in the C-terminal section; belongs to the formate--tetrahydrofolate ligase family. In terms of assembly, homodimer.

It localises to the cytoplasm. It catalyses the reaction (6R)-5,10-methylene-5,6,7,8-tetrahydrofolate + NADP(+) = (6R)-5,10-methenyltetrahydrofolate + NADPH. The enzyme catalyses (6R)-5,10-methenyltetrahydrofolate + H2O = (6R)-10-formyltetrahydrofolate + H(+). It carries out the reaction (6S)-5,6,7,8-tetrahydrofolate + formate + ATP = (6R)-10-formyltetrahydrofolate + ADP + phosphate. Its pathway is one-carbon metabolism; tetrahydrofolate interconversion. In terms of biological role, trifunctional enzyme that catalyzes the interconversion of three forms of one-carbon-substituted tetrahydrofolate: (6R)-5,10-methylene-5,6,7,8-tetrahydrofolate, 5,10-methenyltetrahydrofolate and (6S)-10-formyltetrahydrofolate. These derivatives of tetrahydrofolate are differentially required in nucleotide and amino acid biosynthesis, (6S)-10-formyltetrahydrofolate being required for purine biosynthesis while (6R)-5,10-methylene-5,6,7,8-tetrahydrofolate is used for serine and methionine biosynthesis for instance. The polypeptide is C-1-tetrahydrofolate synthase, cytoplasmic (MTHFD1) (Pongo abelii (Sumatran orangutan)).